The sequence spans 268 residues: Tryptophan synthase alpha chain (268 aa).

Active-site proton acceptor residues include E49 and D60.

It belongs to the TrpA family. As to quaternary structure, tetramer of two alpha and two beta chains.

It carries out the reaction (1S,2R)-1-C-(indol-3-yl)glycerol 3-phosphate + L-serine = D-glyceraldehyde 3-phosphate + L-tryptophan + H2O. The protein operates within amino-acid biosynthesis; L-tryptophan biosynthesis; L-tryptophan from chorismate: step 5/5. In terms of biological role, the alpha subunit is responsible for the aldol cleavage of indoleglycerol phosphate to indole and glyceraldehyde 3-phosphate. The sequence is that of Tryptophan synthase alpha chain from Aeromonas hydrophila subsp. hydrophila (strain ATCC 7966 / DSM 30187 / BCRC 13018 / CCUG 14551 / JCM 1027 / KCTC 2358 / NCIMB 9240 / NCTC 8049).